The chain runs to 1892 residues: Sodium channel protein type 4 subunit alpha A (1892 aa).

At methionine 1–serine 125 the chain is on the cytoplasmic side. The segment at alanine 34–alanine 54 is disordered. One copy of the I repeat lies at isoleucine 107–asparagine 433. Residues leucine 126–methionine 144 traverse the membrane as a helical segment. Topologically, residues serine 145–serine 151 are extracellular. Residues lysine 152–serine 172 form a helical membrane-spanning segment. Over arginine 173–proline 186 the chain is Cytoplasmic. A helical transmembrane segment spans residues tryptophan 187–valine 204. Topologically, residues aspartate 205–serine 210 are extracellular. Residue asparagine 208 is glycosylated (N-linked (GlcNAc...) asparagine). The helical transmembrane segment at alanine 211 to isoleucine 227 threads the bilayer. Residues proline 228 to aspartate 246 lie on the Cytoplasmic side of the membrane. Residues valine 247–phenylalanine 266 form a helical membrane-spanning segment. At methionine 267–serine 370 the chain is on the extracellular side. Cysteine 274 and cysteine 339 are oxidised to a cystine. 3 N-linked (GlcNAc...) asparagine glycosylation sites follow: asparagine 281, asparagine 294, and asparagine 341. Cysteine 348 and cysteine 354 are disulfide-bonded. Residues phenylalanine 371 to leucine 395 constitute an intramembrane region (pore-forming). Over arginine 396–tyrosine 402 the chain is Extracellular. The helical transmembrane segment at methionine 403 to alanine 423 threads the bilayer. Topologically, residues valine 424–proline 612 are cytoplasmic. An II repeat occupies cysteine 594–glycine 866. A helical membrane pass occupies residues phenylalanine 613 to methionine 631. Residues glutamate 632–tyrosine 642 are Extracellular-facing. Residues methionine 643–lysine 662 form a helical membrane-spanning segment. Residues leucine 663–tryptophan 676 are Cytoplasmic-facing. A helical membrane pass occupies residues asparagine 677–valine 696. Topologically, residues glutamine 697 to glycine 698 are extracellular. The helical transmembrane segment at leucine 699–serine 716 threads the bilayer. Residues tryptophan 717 to glycine 732 lie on the Cytoplasmic side of the membrane. A helical membrane pass occupies residues alanine 733–valine 751. Topologically, residues glycine 752–aspartate 780 are extracellular. A disulfide bridge links cysteine 765 with cysteine 771. Positions phenylalanine 781 to tryptophan 801 form an intramembrane region, pore-forming. The Extracellular portion of the chain corresponds to aspartate 802 to cysteine 812. A disulfide bond links cysteine 803 and cysteine 812. Residues leucine 813 to phenylalanine 831 form a helical membrane-spanning segment. Over leucine 832–tryptophan 1071 the chain is Cytoplasmic. 2 disordered regions span residues arginine 884–methionine 905 and leucine 945–aspartate 982. Over residues serine 948–glutamate 971 the composition is skewed to acidic residues. One copy of the III repeat lies at lysine 1052–leucine 1366. A helical membrane pass occupies residues phenylalanine 1072–phenylalanine 1089. At glutamate 1090–isoleucine 1102 the chain is on the extracellular side. A helical membrane pass occupies residues valine 1103 to leucine 1121. Residues lysine 1122–alanine 1135 are Cytoplasmic-facing. The chain crosses the membrane as a helical span at residues tryptophan 1136–asparagine 1154. Topologically, residues leucine 1155–glycine 1162 are extracellular. The helical transmembrane segment at proline 1163–arginine 1181 threads the bilayer. The Cytoplasmic portion of the chain corresponds to phenylalanine 1182–serine 1198. A helical membrane pass occupies residues isoleucine 1199–valine 1218. Topologically, residues asparagine 1219–valine 1270 are extracellular. Cysteine 1228 and cysteine 1248 form a disulfide bridge. 2 N-linked (GlcNAc...) asparagine glycosylation sites follow: asparagine 1230 and asparagine 1244. An intramembrane region (pore-forming) is located at residues alanine 1271 to proline 1292. The Extracellular segment spans residues alanine 1293 to leucine 1309. Residues tyrosine 1310–isoleucine 1331 form a helical membrane-spanning segment. Residues glycine 1332–phenylalanine 1394 lie on the Cytoplasmic side of the membrane. The important for rapid channel inactivation stretch occupies residues isoleucine 1350–methionine 1352. An IV repeat occupies isoleucine 1375–glutamine 1673. Residues phenylalanine 1395 to valine 1412 traverse the membrane as a helical segment. Residues glutamate 1413–aspartate 1423 lie on the Extracellular side of the membrane. The helical transmembrane segment at phenylalanine 1424–leucine 1442 threads the bilayer. Over lysine 1443–asparagine 1454 the chain is Cytoplasmic. Residues glycine 1455–methionine 1472 traverse the membrane as a helical segment. Residues leucine 1473–threonine 1485 are Extracellular-facing. A helical membrane pass occupies residues leucine 1486–isoleucine 1502. At lysine 1503–alanine 1521 the chain is on the cytoplasmic side. The helical transmembrane segment at leucine 1522–phenylalanine 1539 threads the bilayer. The Extracellular portion of the chain corresponds to glycine 1540 to threonine 1561. Positions phenylalanine 1562–proline 1584 form an intramembrane region, pore-forming. Over methionine 1585–glycine 1614 the chain is Extracellular. Cysteine 1593 and cysteine 1608 are oxidised to a cystine. Residues methionine 1615–isoleucine 1637 form a helical membrane-spanning segment. Residues leucine 1638–valine 1892 lie on the Cytoplasmic side of the membrane. Residues glutamate 1767–serine 1796 enclose the IQ domain. A disordered region spans residues arginine 1836–glutamate 1856.

This sequence belongs to the sodium channel (TC 1.A.1.10) family. Nav1.4/SCN4A subfamily. As to quaternary structure, voltage-gated sodium (Nav) channels consist of an ion-conducting alpha subunit which is functional on its own associated with regulatory beta subunits.

It localises to the cell membrane. The catalysed reaction is Na(+)(in) = Na(+)(out). Pore-forming subunit of a voltage-gated sodium (Nav) channel that directly mediates the depolarizing phase of action potentials in excitable membranes. Navs, also called VGSCs (voltage-gated sodium channels) or VDSCs (voltage-dependent sodium channels), operate by switching between closed and open conformations depending on the voltage difference across the membrane. In the open conformation they allow Na(+) ions to selectively pass through the pore, along their electrochemical gradient. The influx of Na+ ions provokes membrane depolarization, initiating the propagation of electrical signals throughout cells and tissues. The polypeptide is Sodium channel protein type 4 subunit alpha A (scn4aa) (Takifugu rubripes (Japanese pufferfish)).